Reading from the N-terminus, the 72-residue chain is Translation initiation factor IF-1 (72 aa).

The 72-residue stretch at methionine 1–lysine 72 folds into the S1-like domain.

The protein belongs to the IF-1 family. As to quaternary structure, component of the 30S ribosomal translation pre-initiation complex which assembles on the 30S ribosome in the order IF-2 and IF-3, IF-1 and N-formylmethionyl-tRNA(fMet); mRNA recruitment can occur at any time during PIC assembly.

The protein localises to the cytoplasm. Functionally, one of the essential components for the initiation of protein synthesis. Stabilizes the binding of IF-2 and IF-3 on the 30S subunit to which N-formylmethionyl-tRNA(fMet) subsequently binds. Helps modulate mRNA selection, yielding the 30S pre-initiation complex (PIC). Upon addition of the 50S ribosomal subunit IF-1, IF-2 and IF-3 are released leaving the mature 70S translation initiation complex. In Leptospira borgpetersenii serovar Hardjo-bovis (strain L550), this protein is Translation initiation factor IF-1.